Consider the following 305-residue polypeptide: Protoheme IX farnesyltransferase (305 aa).

The next 9 membrane-spanning stretches (helical) occupy residues 31–51, 52–72, 96–118, 123–145, 151–171, 179–199, 225–245, 247–267, and 281–301; these read VMSL…YSVH, PFIA…AGAI, VIES…FFMA, LLAS…IWLK, NIVI…AAVS, IILF…LALF, ILIY…IGMN, FIYL…AGSL, and FAYS…TNTI.

The protein belongs to the UbiA prenyltransferase family. Protoheme IX farnesyltransferase subfamily.

It localises to the cell membrane. It catalyses the reaction heme b + (2E,6E)-farnesyl diphosphate + H2O = Fe(II)-heme o + diphosphate. It functions in the pathway porphyrin-containing compound metabolism; heme O biosynthesis; heme O from protoheme: step 1/1. In terms of biological role, converts heme B (protoheme IX) to heme O by substitution of the vinyl group on carbon 2 of heme B porphyrin ring with a hydroxyethyl farnesyl side group. The sequence is that of Protoheme IX farnesyltransferase from Rickettsia africae (strain ESF-5).